Consider the following 151-residue polypeptide: Probable ribonuclease P/MRP protein subunit POP5 (151 aa).

It belongs to the eukaryotic/archaeal RNase P protein component 2 family. Component of nuclear RNase P and RNase MRP ribonucleoproteins. Interacts with GAF1/RPP30.

The protein localises to the nucleus. The protein resides in the nucleolus. Functionally, essential protein required during embryogenesis. Component of ribonuclease P, a protein complex that generates mature tRNA molecules by cleaving their 5'-ends. Also a component of RNase MRP. The chain is Probable ribonuclease P/MRP protein subunit POP5 (EMB1687) from Arabidopsis thaliana (Mouse-ear cress).